The sequence spans 226 residues: Probable functional amyloid protease FapD (226 aa).

Residues 1 to 18 (MRRATLCLLLLLAGPSWA) form the signal peptide. Residues 50–180 (QKTDFSCGAA…AGWNGIVFAV (131 aa)) enclose the Peptidase C39 domain. Cysteine 56 is an active-site residue.

This sequence belongs to the FapD family.

Its subcellular location is the periplasm. Functionally, probable cysteine protease that is involved in processing fibril precursors. Upon overexpression of the endogenous six-gene locus (fapA-fapF) in situ, cells form large clumps during liquid growth, make large amounts of biofilm and produce amyloid fibrils. Expression of the 6 gene operon in E.coli strain BL21(DE3) induces flocculation and biofilm formation with copious extracellular fibrils. The chain is Probable functional amyloid protease FapD from Pseudomonas fluorescens.